The following is a 557-amino-acid chain: Potassium-transporting ATPase potassium-binding subunit (557 aa).

The next 12 helical transmembrane spans lie at 5–25 (GFLLIATFLLVLMVLARPLGS), 63–83 (LCAILGLNMLGLAVLFFMLLG), 132–152 (GLTVQNFLSAASGIAVIFAFI), 170–190 (LLRITLWVLVPVALLIALFFI), 253–273 (FVQMLAIFLIPTALCFAFGEV), 283–303 (LLWAMSVIFVICVGVVMWAEV), 329–349 (VLVSSLFAVVTTAASCGAVIA), 356–376 (ALGGMVPMWLMQIGEVVFGGV), 379–399 (GLYGMMLFVLLAVFIAGLMIG), 416–436 (LTALAILVTPTLVLMGAALAM), 484–504 (LLAFCMFVGRFGVIIPVMAIA), and 526–546 (LFVGLLIGTVLLVGALTFIPA).

The protein belongs to the KdpA family. The system is composed of three essential subunits: KdpA, KdpB and KdpC.

Its subcellular location is the cell inner membrane. Part of the high-affinity ATP-driven potassium transport (or Kdp) system, which catalyzes the hydrolysis of ATP coupled with the electrogenic transport of potassium into the cytoplasm. This subunit binds the periplasmic potassium ions and delivers the ions to the membrane domain of KdpB through an intramembrane tunnel. This is Potassium-transporting ATPase potassium-binding subunit from Shigella boydii serotype 4 (strain Sb227).